The chain runs to 264 residues: Ribosomal protein L11 methyltransferase (264 aa).

The S-adenosyl-L-methionine site is built by Thr-116, Gly-137, Asp-159, and Asn-200.

This sequence belongs to the methyltransferase superfamily. PrmA family.

Its subcellular location is the cytoplasm. The enzyme catalyses L-lysyl-[protein] + 3 S-adenosyl-L-methionine = N(6),N(6),N(6)-trimethyl-L-lysyl-[protein] + 3 S-adenosyl-L-homocysteine + 3 H(+). Functionally, methylates ribosomal protein L11. This is Ribosomal protein L11 methyltransferase from Thermotoga neapolitana.